The following is a 165-amino-acid chain: Deoxyuridine 5'-triphosphate nucleotidohydrolase (165 aa).

Residues 66 to 68 (RSG), Asn-79, 83 to 85 (TVD), and Lys-93 contribute to the substrate site. The tract at residues 134–165 (ETSRGAGGHGSSGGHASLTPGARSAARVAQEG) is disordered.

Belongs to the dUTPase family. Mg(2+) serves as cofactor.

The enzyme catalyses dUTP + H2O = dUMP + diphosphate + H(+). The protein operates within pyrimidine metabolism; dUMP biosynthesis; dUMP from dCTP (dUTP route): step 2/2. Its function is as follows. This enzyme is involved in nucleotide metabolism: it produces dUMP, the immediate precursor of thymidine nucleotides and it decreases the intracellular concentration of dUTP so that uracil cannot be incorporated into DNA. The polypeptide is Deoxyuridine 5'-triphosphate nucleotidohydrolase (Nocardia farcinica (strain IFM 10152)).